The following is a 690-amino-acid chain: Potassium-transporting ATPase ATP-binding subunit (690 aa).

Transmembrane regions (helical) follow at residues 49 to 69 (SPVM…CFVP), 72 to 92 (AVPT…VLFA), 229 to 249 (VALD…VVTL), and 253 to 273 (ALFA…VTLI). Catalysis depends on Asp317, which acts as the 4-aspartylphosphate intermediate. Residues Asp354, Glu358, 385–392 (FSAETRLS), and Lys403 contribute to the ATP site. Mg(2+) is bound by residues Asp526 and Asp530. The next 3 membrane-spanning stretches (helical) occupy residues 596–616 (FAIL…LNVM), 624–644 (AILS…PLAL), and 662–682 (LLIY…AIDL).

This sequence belongs to the cation transport ATPase (P-type) (TC 3.A.3) family. Type IA subfamily. As to quaternary structure, the system is composed of three essential subunits: KdpA, KdpB and KdpC.

The protein localises to the cell inner membrane. It carries out the reaction K(+)(out) + ATP + H2O = K(+)(in) + ADP + phosphate + H(+). Functionally, part of the high-affinity ATP-driven potassium transport (or Kdp) system, which catalyzes the hydrolysis of ATP coupled with the electrogenic transport of potassium into the cytoplasm. This subunit is responsible for energy coupling to the transport system and for the release of the potassium ions to the cytoplasm. In Pseudomonas aeruginosa (strain ATCC 15692 / DSM 22644 / CIP 104116 / JCM 14847 / LMG 12228 / 1C / PRS 101 / PAO1), this protein is Potassium-transporting ATPase ATP-binding subunit.